Reading from the N-terminus, the 315-residue chain is MSYASDVKKELTMLEVHFGNAKAELMALIRMNGSLSIVNKQFVLSVQTENPAIARRIYRLLKQFYDIESELIVRRKMKLKKNNFYIVRLKTGTNEILKDLDILDNFQIKETVPLEFLDDDAKVRSYLRGAFLATGSVNNPETSRYHLEIYSLYEDHNDTICEMMNRYGLNARKTERRSGYITYLKEAEKIADFLSLIGATNAMLKFEDIRIVRDMRNSVNRIVNCETANLNKIADASKKQIDNIKLIDAKVGIDKLPQKLQEVAIARLGHPEESLKNLGELIPGGPISKSGINHRLRKLNEIAEKIRAGESIAVL.

A DNA-binding region (H-T-H motif) is located at residues 274–308; sequence SLKNLGELIPGGPISKSGINHRLRKLNEIAEKIRA.

The protein belongs to the WhiA family.

Its function is as follows. Involved in cell division and chromosome segregation. This Ligilactobacillus salivarius (strain UCC118) (Lactobacillus salivarius) protein is Probable cell division protein WhiA.